Here is a 295-residue protein sequence, read N- to C-terminus: Nucleotide-binding protein MCA0739 (295 aa).

An ATP-binding site is contributed by 8–15 (GFSGSGKS). 60–63 (DARN) is a GTP binding site.

This sequence belongs to the RapZ-like family.

Functionally, displays ATPase and GTPase activities. The chain is Nucleotide-binding protein MCA0739 from Methylococcus capsulatus (strain ATCC 33009 / NCIMB 11132 / Bath).